Reading from the N-terminus, the 545-residue chain is Sterol O-acyltransferase 1 (545 aa).

N-acetylmethionine is present on M1. Positions 1–24 are disordered; the sequence is MVGEETSLRNRLSRSAENPEQDEA. Residues 1-133 are Cytoplasmic-facing; the sequence is MVGEETSLRN…LDELFEVDHI (133 aa). Residue S7 is modified to Phosphoserine. Residues 9 to 18 are compositionally biased toward polar residues; the sequence is RNRLSRSAEN. Residue H132 participates in cholesterol binding. A helical membrane pass occupies residues 134–155; the sequence is RTIYHMFIALLIIFILSTLVVD. Residues 156–175 lie on the Lumenal side of the membrane; the sequence is YIDEGRLVLEFSLLAYAFGQ. A helical membrane pass occupies residues 176 to 201; it reads FPIVIWTWWAMFLSTLAIPYFLFQRW. Residues 202-213 lie on the Cytoplasmic side of the membrane; sequence AHGYSKSSHPLI. A helical transmembrane segment spans residues 214–239; sequence YSLIHGAFFLVFQLGILGFIPTYVVL. Topologically, residues 240–247 are lumenal; that stretch reads AYTLPPAS. A helical membrane pass occupies residues 248 to 271; it reads RFILILEQIRLVMKAHSYVRENVP. Over 272–314 the chain is Cytoplasmic; the sequence is RVLSAAKEKSSTVPVPTVNQYLYFLFAPTLIYRDSYPRTPTVR. A helical membrane pass occupies residues 315–347; it reads WGYVAMQFLQVFGCLFYVYYIFERLCAPLFRNI. The Lumenal portion of the chain corresponds to 348-364; that stretch reads KQEPFSARVLVLCVFNS. Residues 365–390 form a helical membrane-spanning segment; that stretch reads ILPGVLMLFLSFFAFLHCWLNAFAEM. Topologically, residues 391 to 438 are cytoplasmic; that stretch reads LRFGDRMFYKDWWNSTSYSNYYRTWNVVVHDWLYYYVYKDLLWFFSKR. The FYXDWWN motif signature appears at 398–404; the sequence is FYKDWWN. Residues N410, R413, N416, H420, Y428, and S451 each contribute to the an acyl-CoA site. A helical membrane pass occupies residues 439 to 463; the sequence is FRPAAMLAVFALSAVVHEYALAVCL. H455 is a catalytic residue. At 464–469 the chain is on the lumenal side; that stretch reads SYFYPV. The chain crosses the membrane as a helical span at residues 470–485; sequence LFVLFMFFGMAFNFIV. Topologically, residues 486 to 491 are cytoplasmic; it reads NDSRKR. The helical transmembrane segment at 492-523 threads the bilayer; sequence PVWNIMVRASLFLGHGVILCFYSQEWYARQRC. A disulfide bridge links C523 with C541. The Lumenal segment spans residues 524–545; sequence PLKNPTFLDYVRPRTWTCRYVF.

The protein belongs to the membrane-bound acyltransferase family. Sterol o-acyltransferase subfamily. May form homo- or heterodimers. Interacts with UBIAD1.

Its subcellular location is the endoplasmic reticulum membrane. It catalyses the reaction a sterol + a long-chain fatty acyl-CoA = a long-chain 3-hydroxysterol ester + CoA. It carries out the reaction cholesterol + an acyl-CoA = a cholesterol ester + CoA. The catalysed reaction is cholesterol + (9Z)-octadecenoyl-CoA = cholesteryl (9Z-octadecenoate) + CoA. The enzyme catalyses cholesterol + hexadecanoyl-CoA = cholesteryl hexadecanoate + CoA. It catalyses the reaction octadecanoyl-CoA + cholesterol = cholesteryl octadecanoate + CoA. It carries out the reaction (9Z,12Z)-octadecadienoyl-CoA + cholesterol = cholesteryl (9Z,12Z)-octadecadienoate + CoA. The catalysed reaction is (5Z,8Z,11Z,14Z)-eicosatetraenoyl-CoA + cholesterol = cholesteryl (5Z,8Z,11Z,14Z)-eicosatetraenoate + CoA. The enzyme catalyses (9Z)-hexadecenoyl-CoA + cholesterol = cholesteryl (9Z)-hexadecenoate + CoA. It catalyses the reaction (11Z)-octadecenoyl-CoA + cholesterol = cholesteryl (11Z)-octadecenoate + CoA. It carries out the reaction (7Z)-octadecenoyl-CoA + cholesterol = cholesteryl (7Z)-octadecenoate + CoA. Functionally, catalyzes the formation of fatty acid-cholesterol esters, which are less soluble in membranes than cholesterol. Plays a role in lipoprotein assembly and dietary cholesterol absorption. Preferentially utilizes oleoyl-CoA ((9Z)-octadecenoyl-CoA) as substrate: shows a higher activity towards an acyl-CoA substrate with a double bond at the delta-9 position (9Z) than towards saturated acyl-CoA or an unsaturated acyl-CoA with a double bond at the delta-7 (7Z) or delta-11 (11Z) positions. In Rattus norvegicus (Rat), this protein is Sterol O-acyltransferase 1.